The chain runs to 507 residues: Cobyric acid synthase (507 aa).

Residues 251–448 (DIDIAVVHLP…LHGLFDSDAF (198 aa)) enclose the GATase cobBQ-type domain. Catalysis depends on cysteine 332, which acts as the Nucleophile. Histidine 440 is a catalytic residue.

This sequence belongs to the CobB/CobQ family. CobQ subfamily.

It functions in the pathway cofactor biosynthesis; adenosylcobalamin biosynthesis. Catalyzes amidations at positions B, D, E, and G on adenosylcobyrinic A,C-diamide. NH(2) groups are provided by glutamine, and one molecule of ATP is hydrogenolyzed for each amidation. The sequence is that of Cobyric acid synthase from Klebsiella pneumoniae subsp. pneumoniae (strain ATCC 700721 / MGH 78578).